The sequence spans 376 residues: Queuine tRNA-ribosyltransferase (376 aa).

Catalysis depends on Asp-90, which acts as the Proton acceptor. Substrate contacts are provided by residues 90 to 94 (DSGGF), Asp-144, Gln-193, and Gly-220. The tract at residues 251–257 (GVGTPED) is RNA binding. The active-site Nucleophile is the Asp-270. Positions 275-279 (TRNAR) are RNA binding; important for wobble base 34 recognition. Zn(2+) contacts are provided by Cys-308, Cys-310, Cys-313, and His-339.

The protein belongs to the queuine tRNA-ribosyltransferase family. As to quaternary structure, homodimer. Within each dimer, one monomer is responsible for RNA recognition and catalysis, while the other monomer binds to the replacement base PreQ1. The cofactor is Zn(2+).

It catalyses the reaction 7-aminomethyl-7-carbaguanine + guanosine(34) in tRNA = 7-aminomethyl-7-carbaguanosine(34) in tRNA + guanine. The protein operates within tRNA modification; tRNA-queuosine biosynthesis. Functionally, catalyzes the base-exchange of a guanine (G) residue with the queuine precursor 7-aminomethyl-7-deazaguanine (PreQ1) at position 34 (anticodon wobble position) in tRNAs with GU(N) anticodons (tRNA-Asp, -Asn, -His and -Tyr). Catalysis occurs through a double-displacement mechanism. The nucleophile active site attacks the C1' of nucleotide 34 to detach the guanine base from the RNA, forming a covalent enzyme-RNA intermediate. The proton acceptor active site deprotonates the incoming PreQ1, allowing a nucleophilic attack on the C1' of the ribose to form the product. After dissociation, two additional enzymatic reactions on the tRNA convert PreQ1 to queuine (Q), resulting in the hypermodified nucleoside queuosine (7-(((4,5-cis-dihydroxy-2-cyclopenten-1-yl)amino)methyl)-7-deazaguanosine). This Cupriavidus taiwanensis (strain DSM 17343 / BCRC 17206 / CCUG 44338 / CIP 107171 / LMG 19424 / R1) (Ralstonia taiwanensis (strain LMG 19424)) protein is Queuine tRNA-ribosyltransferase.